A 143-amino-acid chain; its full sequence is Hemoglobin subunit alpha-1 (143 aa).

At Ser2 the chain carries N-acetylserine. Residues 2–143 enclose the Globin domain; sequence SLSSKDKATV…LALALAEKYR (142 aa). O2 is bound at residue His60. His89 lines the heme b pocket.

It belongs to the globin family. In terms of assembly, hb 1 is a heterotetramer of two alpha-1 and two beta-1 chains. In terms of tissue distribution, red blood cells.

Involved in oxygen transport from gills to the various peripheral tissues. The polypeptide is Hemoglobin subunit alpha-1 (hba1) (Arctogadus glacialis (Arctic cod)).